The primary structure comprises 198 residues: ATP-dependent Clp protease proteolytic subunit 2 (198 aa).

Ser101 acts as the Nucleophile in catalysis. The active site involves His126.

The protein belongs to the peptidase S14 family. Fourteen ClpP subunits assemble into 2 heptameric rings which stack back to back to give a disk-like structure with a central cavity, resembling the structure of eukaryotic proteasomes.

The protein resides in the cytoplasm. It carries out the reaction Hydrolysis of proteins to small peptides in the presence of ATP and magnesium. alpha-casein is the usual test substrate. In the absence of ATP, only oligopeptides shorter than five residues are hydrolyzed (such as succinyl-Leu-Tyr-|-NHMec, and Leu-Tyr-Leu-|-Tyr-Trp, in which cleavage of the -Tyr-|-Leu- and -Tyr-|-Trp bonds also occurs).. In terms of biological role, cleaves peptides in various proteins in a process that requires ATP hydrolysis. Has a chymotrypsin-like activity. Plays a major role in the degradation of misfolded proteins. The chain is ATP-dependent Clp protease proteolytic subunit 2 from Thermosynechococcus vestitus (strain NIES-2133 / IAM M-273 / BP-1).